The primary structure comprises 282 residues: Para-Rep C2 (282 aa).

Residues 1–99 (MASKRWCFTL…ETLIAEIGAP (99 aa)) enclose the CRESS-DNA virus Rep endonuclease domain. An RCR-1 motif is present at residues 7–10 (CFTL). A divalent metal cation contacts are provided by Glu38 and His47. The short motif at 47-49 (HLQ) is the RCR-2 element. The Nuclear localization signal motif lies at 56 to 77 (KLIRLGGLKKKFGSIAHWEIAK). The active-site For DNA cleavage activity is Tyr86. The short motif at 86 to 89 (YCTK) is the RCR-3 element. The short motif at 99–105 (PVKKGSN) is the Nuclear localization signal element. An ATP-binding site is contributed by 174 to 182 (GPDGGEGKS).

This sequence belongs to the nanoviridea/circoviridae replication-associated protein family. As to quaternary structure, homooligomer (Potential). Rep binds to repeated DNA motifs (iterons). It depends on Mg(2+) as a cofactor. Requires Mn(2+) as cofactor.

The protein localises to the host nucleus. The enzyme catalyses ATP + H2O = ADP + phosphate + H(+). Initiates and terminates the replication only of its own subviral DNA molecule. The closed circular ssDNA genome is first converted to a superhelical dsDNA. Rep binds a specific hairpin at the genome origin of replication. Introduces an endonucleolytic nick within the intergenic region of the genome, thereby initiating the rolling circle replication (RCR). Following cleavage, binds covalently to the 5'-phosphate of DNA as a tyrosyl ester. The cleavage gives rise to a free 3'-OH that serves as a primer for the cellular DNA polymerase. The polymerase synthesizes the (+) strand DNA by rolling circle mechanism. After one round of replication, a Rep-catalyzed nucleotidyl transfer reaction releases a circular single-stranded virus genome, thereby terminating the replication. Displays origin-specific DNA cleavage, nucleotidyl transferase, ATPase and helicase activities. This Milk vetch dwarf C2 alphasatellite (MVDC2A) protein is Para-Rep C2 (C2).